A 208-amino-acid polypeptide reads, in one-letter code: Protein GrpE (208 aa).

A compositionally biased stretch (basic and acidic residues) spans 1–27; it reads MERMNQSRKVPIHDAAEESSAEAHETQ. The segment at 1–65 is disordered; that stretch reads MERMNQSRKV…AEEAQEEEAA (65 aa). A compositionally biased stretch (acidic residues) spans 45 to 64; the sequence is MAEEAVEQAQDAEEAQEEEA.

Belongs to the GrpE family. Homodimer.

It localises to the cytoplasm. Functionally, participates actively in the response to hyperosmotic and heat shock by preventing the aggregation of stress-denatured proteins, in association with DnaK and GrpE. It is the nucleotide exchange factor for DnaK and may function as a thermosensor. Unfolded proteins bind initially to DnaJ; upon interaction with the DnaJ-bound protein, DnaK hydrolyzes its bound ATP, resulting in the formation of a stable complex. GrpE releases ADP from DnaK; ATP binding to DnaK triggers the release of the substrate protein, thus completing the reaction cycle. Several rounds of ATP-dependent interactions between DnaJ, DnaK and GrpE are required for fully efficient folding. The sequence is that of Protein GrpE from Desulfatibacillum aliphaticivorans.